The following is a 659-amino-acid chain: Exoribonuclease 2 (659 aa).

The 344-residue stretch at Arg189–Asn532 folds into the RNB domain. Residues Asn576–Leu658 enclose the S1 motif domain.

It belongs to the RNR ribonuclease family. RNase II subfamily.

It is found in the cytoplasm. The catalysed reaction is Exonucleolytic cleavage in the 3'- to 5'-direction to yield nucleoside 5'-phosphates.. Involved in mRNA degradation. Hydrolyzes single-stranded polyribonucleotides processively in the 3' to 5' direction. This chain is Exoribonuclease 2, found in Glaesserella parasuis serovar 5 (strain SH0165) (Haemophilus parasuis).